The following is a 272-amino-acid chain: Dermonecrotic toxin LvSicTox-alphaIC1aiii (272 aa).

Residue H4 is part of the active site. Mg(2+) is bound by residues E24 and D26. H40 serves as the catalytic Nucleophile. 2 disulfides stabilise this stretch: C44-C50 and C46-C189. D84 contacts Mg(2+).

Belongs to the arthropod phospholipase D family. Class II subfamily. The cofactor is Mg(2+). Expressed by the venom gland.

It is found in the secreted. It catalyses the reaction an N-(acyl)-sphingosylphosphocholine = an N-(acyl)-sphingosyl-1,3-cyclic phosphate + choline. It carries out the reaction an N-(acyl)-sphingosylphosphoethanolamine = an N-(acyl)-sphingosyl-1,3-cyclic phosphate + ethanolamine. The enzyme catalyses a 1-acyl-sn-glycero-3-phosphocholine = a 1-acyl-sn-glycero-2,3-cyclic phosphate + choline. The catalysed reaction is a 1-acyl-sn-glycero-3-phosphoethanolamine = a 1-acyl-sn-glycero-2,3-cyclic phosphate + ethanolamine. Its function is as follows. Dermonecrotic toxins cleave the phosphodiester linkage between the phosphate and headgroup of certain phospholipids (sphingolipid and lysolipid substrates), forming an alcohol (often choline) and a cyclic phosphate. This toxin acts on sphingomyelin (SM). It may also act on ceramide phosphoethanolamine (CPE), lysophosphatidylcholine (LPC) and lysophosphatidylethanolamine (LPE), but not on lysophosphatidylserine (LPS), and lysophosphatidylglycerol (LPG). It acts by transphosphatidylation, releasing exclusively cyclic phosphate products as second products. Induces dermonecrosis, hemolysis, increased vascular permeability, edema, inflammatory response, and platelet aggregation. The sequence is that of Dermonecrotic toxin LvSicTox-alphaIC1aiii from Loxosceles variegata (Recluse spider).